Consider the following 410-residue polypeptide: DNA replication and repair protein RecF (410 aa).

30–37 (GPNGHGKT) contacts ATP.

Belongs to the RecF family.

Its subcellular location is the cytoplasm. In terms of biological role, the RecF protein is involved in DNA metabolism; it is required for DNA replication and normal SOS inducibility. RecF binds preferentially to single-stranded, linear DNA. It also seems to bind ATP. This is DNA replication and repair protein RecF from Rhodococcus opacus (strain B4).